The chain runs to 239 residues: MAVVTLSEMMEAGAHFGHQTRRWNPKMSRYIYCARNGVHIIDLVQTAICMNNAYKWTRSSARSGKRFLFVGTKKQASEVVALEATRCGASYVNQRWLGGMLTNWTTMKARIDRLKDLERMESSGAIAMRPKKEASVLRRELERLQKYLGGLKGMRRLPDVVVLVDQRRETNAVLEARKLDIPLVSMLDTNCDPDLCEVPIPCNDDAVRSVQLVLGRLADAINEGRHGTNEQRGADDNDD.

Belongs to the universal ribosomal protein uS2 family.

This Prochlorococcus marinus (strain MIT 9303) protein is Small ribosomal subunit protein uS2.